Here is a 371-residue protein sequence, read N- to C-terminus: Ferrochelatase (371 aa).

Fe cation-binding residues include His-218 and Glu-299.

This sequence belongs to the ferrochelatase family.

It is found in the cytoplasm. The catalysed reaction is heme b + 2 H(+) = protoporphyrin IX + Fe(2+). Its pathway is porphyrin-containing compound metabolism; protoheme biosynthesis; protoheme from protoporphyrin-IX: step 1/1. Its function is as follows. Catalyzes the ferrous insertion into protoporphyrin IX. This Ralstonia pickettii (strain 12J) protein is Ferrochelatase.